The chain runs to 682 residues: Connectin (682 aa).

A signal peptide spans 1-24 (MATLADSAICFLLLSLLLIGACLV). The disordered stretch occupies residues 29–54 (GRAKDDRRTRGRGSSSGVLSSSSSSS). Residues 40 to 54 (RGSSSGVLSSSSSSS) show a composition bias toward low complexity. 11 LRR repeats span residues 149 to 172 (LRELKFVIQNNARLDYIPTMIIEP), 173 to 196 (LKNLSSIVIEYSQVEIVKSYAFAN), 199 to 220 (FLERIILNNNHIMALDQDAFAN), 223 to 244 (RLRELNLEHNQIFEMDRYAFRN), 247 to 268 (LCERLFLNNNNISTLHEGLFAD), 271 to 292 (RLTFLNLAHNQINVLTSEIFRG), 295 to 316 (NLNVLKLTRNNLNFIGDTVFAE), 319 to 342 (SLSELELDDNRIERISERALDGLN), 343 to 364 (TLKTLNLRNNLLKKIDNGLLRG), 367 to 388 (ALLSINVQANKLETLTFYTFQP), and 389 to 404 (IMDNLVNSTSELLVSD). The LRRCT domain maps to 405-462 (NKFICDCRLQWIFELKNRTRHLQLRDSLEDLHCTLQEPKLSHFVDPVPPTILDVLNIG). A disordered region spans residues 503–536 (RQALRGQRQFASSAENVVESKMRRRRKRQEEVKE). A lipid anchor (GPI-anchor amidated alanine) is attached at alanine 658. A propeptide spans 659–682 (GANSLAQGMTIIVSLVALMMISRG) (removed in mature form).

Predominantly expressed in abdominal and thoracic segment muscle and motorneuron cells.

Its subcellular location is the cell membrane. In terms of biological role, cell adhesion protein involved in target recognition during neuromuscular development. Mediates homophilic cellular adhesion. The sequence is that of Connectin (Con) from Drosophila melanogaster (Fruit fly).